Here is an 84-residue protein sequence, read N- to C-terminus: Small ribosomal subunit protein bS20 (84 aa).

Residues methionine 1–methionine 25 form a disordered region.

It belongs to the bacterial ribosomal protein bS20 family.

Its function is as follows. Binds directly to 16S ribosomal RNA. The sequence is that of Small ribosomal subunit protein bS20 from Ureaplasma parvum serovar 3 (strain ATCC 700970).